The chain runs to 155 residues: Ribosomal RNA large subunit methyltransferase H (155 aa).

S-adenosyl-L-methionine is bound by residues L73, G104, and 123 to 128 (LSPLTL).

It belongs to the RNA methyltransferase RlmH family. Homodimer.

Its subcellular location is the cytoplasm. The catalysed reaction is pseudouridine(1915) in 23S rRNA + S-adenosyl-L-methionine = N(3)-methylpseudouridine(1915) in 23S rRNA + S-adenosyl-L-homocysteine + H(+). Specifically methylates the pseudouridine at position 1915 (m3Psi1915) in 23S rRNA. The protein is Ribosomal RNA large subunit methyltransferase H of Pseudomonas fluorescens (strain ATCC BAA-477 / NRRL B-23932 / Pf-5).